Consider the following 468-residue polypeptide: MLGTVKMEGHESNDWNSYYADTQEAYSSVPVSNMNSGLGSMNSMNTYMTMNTMTTSGNMTPASFNMSYANTGLGAGLSPGAVAGMPGASAGAMNSMTAAGVTAMGTALSPGGMGSMGAQPATSMNGLGPYAAAMNPCMSPMAYAPSNLGRSRAGGGGDAKTFKRSYPHAKPPYSYISLITMAIQQAPSKMLTLSEIYQWIMDLFPYYRQNQQRWQNSIRHSLSFNDCFVKVARSPDKPGKGSYWTLHPDSGNMFENGCYLRRQKRFKCEKQPGAGGGSGGGGSKGGPESRKDPSGPGNPSAESPLHRGVHGKASQLEGAPAPGPAASPQTLDHSGATATGGASELKSPASSSAPPISSGPGALASVPPSHPAHGLAPHESQLHLKGDPHYSFNHPFSINNLMSSSEQQHKLDFKAYEQALQYSPYGATLPASLPLGSASVATRSPIEPSALEPAYYQGVYSRPVLNTS.

The fork-head DNA-binding region spans 169-260 (AKPPYSYISL…GNMFENGCYL (92 aa)). An essential for DNA binding region spans residues 251-288 (GNMFENGCYLRRQKRFKCEKQPGAGGGSGGGGSKGGPE). Residues 269–396 (EKQPGAGGGS…DPHYSFNHPF (128 aa)) form a disordered region. Residues 273-285 (GAGGGSGGGGSKG) are compositionally biased toward gly residues. S303 and S327 each carry phosphoserine. 2 stretches are compositionally biased toward low complexity: residues 318–328 (GAPAPGPAASP) and 347–365 (SPAS…ALAS).

In terms of assembly, binds DNA as a monomer. Interacts with FOXA2. Interacts with NKX2-1. Interacts with HDAC7. Interacts with the histone H3-H4 heterodimer. Associates with nucleosomes containing histone H2A. Interacts with AR. Interacts with NR0B2. Restricted mainly to endoderm-derived tissues (lung, liver, stomach, and small intestine). Expressed in the prostate.

It is found in the nucleus. Its function is as follows. Transcription factor that is involved in embryonic development, establishment of tissue-specific gene expression and regulation of gene expression in differentiated tissues. Is thought to act as a 'pioneer' factor opening the compacted chromatin for other proteins through interactions with nucleosomal core histones and thereby replacing linker histones at target enhancer and/or promoter sites. Binds DNA with the consensus sequence 5'-[AC]A[AT]T[AG]TT[GT][AG][CT]T[CT]-3'. Proposed to play a role in translating the epigenetic signatures into cell type-specific enhancer-driven transcriptional programs. Involved in the development of multiple endoderm-derived organ systems such as the liver, pancreas, lungs and prostate; FOXA1 and FOXA2 seem to have at least in part redundant roles. Plays a role in prostate morphogenesis and epithelial cell differentiation. FOXA1 and FOXA2 are essential for hepatic specification. FOXA1 and FOXA2 are required for morphogenesis and cell differentiation during formation of the lung. FOXA1 and FOXA2 are involved in bile duct formation; they positively regulate the binding of glucocorticoid receptor/NR3C1 to the IL6 promoter. FOXA1 and FOXA2 regulate multiple phases of midbrain dopaminergic neuron development; they regulate expression of NEUROG2 at the beginning of mDA neurogenesis and of NR4A2 and EN1 in immature mDA neurons. Modulates the transcriptional activity of nuclear hormone receptors. Is involved in ESR1-mediated transcription. Inhibits NKX2-1-mediated transcription from the SFTPC promoter in lung epithel independently from DNA-binding. Involved in regulation of apoptosis. Involved in cell cycle regulation. Originally described as a transcription activator for a number of liver genes such as AFP, albumin, tyrosine aminotransferase, PEPCK, etc. Interacts with the cis-acting regulatory regions of these genes. Involved in glucose homeostasis; activates the GCG promoter. The chain is Hepatocyte nuclear factor 3-alpha (Foxa1) from Mus musculus (Mouse).